The primary structure comprises 124 residues: Large ribosomal subunit protein eL33 (124 aa).

Ala2 bears the N-acetylalanine mark.

Belongs to the eukaryotic ribosomal protein eL33 family.

The sequence is that of Large ribosomal subunit protein eL33 from Caenorhabditis elegans.